Here is a 489-residue protein sequence, read N- to C-terminus: Serotonin-gated chloride channel mod-1 (489 aa).

Residues 1–20 form the signal peptide; it reads MKFIPEITLLLLLFVHSTQA. At 21–240 the chain is on the extracellular side; sequence KGKRRKCPEG…VTFTFKRRYG (220 aa). 3 N-linked (GlcNAc...) asparagine glycosylation sites follow: Asn44, Asn103, and Asn144. 2 residues coordinate serotonin: Tyr180 and Trp226. 3 helical membrane passes run 241–261, 274–294, and 304–324; these read FYIIQAYVPTYLTIIVSWVSF, VGISSLLALTFQFGNILKNLP, and VWMLGCISFVFGTMVELAFVC. Residues 325–458 lie on the Cytoplasmic side of the membrane; the sequence is YISRCQNSVR…ARFHPEAVDK (134 aa). Residues 365-398 form a disordered region; that stretch reads GSVISHYHPTSNGNGNNNRHDTPQVTGRGSLHRN. Residues 372–391 show a composition bias toward polar residues; the sequence is HPTSNGNGNNNRHDTPQVTG. The chain crosses the membrane as a helical span at residues 459–479; the sequence is FSIVAFPLAFTMFNLVYWWHY.

This sequence belongs to the ligand-gated ion channel (TC 1.A.9) family. As to expression, expressed in a subset of muscles, and head and tail neurons, including RME and GABAergic ventral nerve cord neurons. Expressed in AIY, RME, RID, RIF, ASI, DD1-6, and PVN neurons.

The protein localises to the membrane. The protein resides in the cell membrane. In terms of biological role, functions as a 5-hydroxytryptamine (serotonin) receptor. This receptor is a ligand-gated anion-specific ion channel, selective for chloride ions. Relays a long-range endocrine signal from the body cavity neurons to modulate distal adipose triglyceride lipase atgl-1 function, via the nuclear receptor nhr-76. Together with the G-protein coupled serotonin receptor ser-1 involved in male mating behavior. May mediate an inhibitory effect of serotonin on egg laying. Involved in regulating locomotory behavior, perhaps by modulating interneuronal signaling, acting in concert with G-protein coupled serotonin receptor ser-4. In the presence of food, plays a role in initiating and extending dwelling behavior, perhaps acting in AIY, RIF and ASI neurons, in opposition to neuropeptide PDF-mediated signaling. Plays a role in aversive learning upon exposure to pathogens such as Gram-negative bacterium P.aeruginosa strain PA14; perhaps acting in interneurons in response to serotonin released by the serotonergic ADF neurons. The protein is Serotonin-gated chloride channel mod-1 of Caenorhabditis elegans.